We begin with the raw amino-acid sequence, 408 residues long: Na(+)/H(+) antiporter NhaA (408 aa).

12 helical membrane-spanning segments follow: residues 42-62 (LMFVAALALLLANSPFAPVYF), 69-89 (VLGLTVLHWINDALMAVFFLL), 110-130 (ALPGIAALGGMVVPAVIFIAV), 140-160 (GWAIPSATDIAFALGVLSLLG), 169-189 (IFLTALAILDDLGAVLIIALF), 192-212 (AELTPLMLILAAATLLGLAAL), 215-235 (FGVKPLAPYLVLGVVLWFFVL), 238-258 (GIHATLAGVALALAIPLQAST), 277-297 (VAFLIVPVFGFANAGVSFAGL), 312-332 (LGLFFGKQVGVFGFAWLAIWL), 346-366 (LYGVAVLCGIGFTMSLFIGLL), and 380-400 (IGVLLGSTLAGLIGWLILRVT).

The protein belongs to the NhaA Na(+)/H(+) (TC 2.A.33) antiporter family.

It is found in the cell inner membrane. It carries out the reaction Na(+)(in) + 2 H(+)(out) = Na(+)(out) + 2 H(+)(in). Na(+)/H(+) antiporter that extrudes sodium in exchange for external protons. The polypeptide is Na(+)/H(+) antiporter NhaA (Nitrobacter hamburgensis (strain DSM 10229 / NCIMB 13809 / X14)).